We begin with the raw amino-acid sequence, 629 residues long: Interleukin-23 receptor (629 aa).

The first 23 residues, 1–23, serve as a signal peptide directing secretion; sequence MNQVTIQWDAVIALYILFSWCHG. Residues 24–355 are Extracellular-facing; it reads GITNINCSGH…LTSDNRGDIG (332 aa). Asn-29 is a glycosylation site (N-linked (GlcNAc...) asparagine; partial). N-linked (GlcNAc...) asparagine glycans are attached at residues Asn-47, Asn-81, and Asn-141. 2 consecutive Fibronectin type-III domains span residues 127 to 217 and 219 to 318; these read IPDE…LDDI and IPSA…TPET. N-linked (GlcNAc...) (high mannose) asparagine glycosylation is present at Asn-180. 2 N-linked (GlcNAc...) asparagine glycosylation sites follow: Asn-232 and Asn-262. An N-linked (GlcNAc...) asparagine; partial glycan is attached at Asn-273. Residues 356 to 376 form a helical membrane-spanning segment; it reads LLLGMIVFAVMLSILSLIGIF. Residues 377 to 629 lie on the Cytoplasmic side of the membrane; that stretch reads NRSFRTGIKR…HFNRISLLEK (253 aa).

This sequence belongs to the type I cytokine receptor family. Type 2 subfamily. In terms of assembly, heterodimer with IL12RB1. In presence of IL23, the heterodimer forms the IL23 receptor. Interacts with JAK2 and in presence of IL23 with STAT3. Post-translationally, phosphorylated in response to IL23. As to expression, expressed by monocytes, Th1, Th0, NK and dendritic cells. Isoform 1 is specifically expressed in NK cells.

The protein localises to the cell membrane. In terms of biological role, associates with IL12RB1 to form the interleukin-23 receptor. Binds IL23 and mediates T-cells, NK cells and possibly certain macrophage/myeloid cells stimulation probably through activation of the Jak-Stat signaling cascade. IL23 functions in innate and adaptive immunity and may participate in acute response to infection in peripheral tissues. IL23 may be responsible for autoimmune inflammatory diseases and be important for tumorigenesis. This chain is Interleukin-23 receptor (IL23R), found in Homo sapiens (Human).